The following is a 471-amino-acid chain: L-lysine 2,3-aminomutase (471 aa).

Residues 120-332 (HRYPDRVLFL…GLRGHTSGYA (213 aa)) form the Radical SAM core domain. The [4Fe-4S] cluster site is built by Cys134, Cys138, and Cys141. Lys346 bears the N6-(pyridoxal phosphate)lysine mark.

Belongs to the radical SAM superfamily. KamA family. Homotetramer. The cofactor is [4Fe-4S] cluster. Pyridoxal 5'-phosphate is required as a cofactor.

It catalyses the reaction L-lysine = (3S)-3,6-diaminohexanoate. Its pathway is amino-acid degradation; L-lysine degradation via acetate pathway. Its function is as follows. Catalyzes the interconversion of L-alpha-lysine and L-beta-lysine. This chain is L-lysine 2,3-aminomutase (kamA), found in Bacillus subtilis (strain 168).